The primary structure comprises 422 residues: UDP-N-acetylglucosamine 1-carboxyvinyltransferase (422 aa).

22–23 is a binding site for phosphoenolpyruvate; it reads KN. Arg-92 is a UDP-N-acetyl-alpha-D-glucosamine binding site. Cys-116 (proton donor) is an active-site residue. Cys-116 bears the 2-(S-cysteinyl)pyruvic acid O-phosphothioketal mark. Residues 121-125, Asp-305, and Ile-327 contribute to the UDP-N-acetyl-alpha-D-glucosamine site; that span reads RPVDQ.

It belongs to the EPSP synthase family. MurA subfamily.

The protein localises to the cytoplasm. It carries out the reaction phosphoenolpyruvate + UDP-N-acetyl-alpha-D-glucosamine = UDP-N-acetyl-3-O-(1-carboxyvinyl)-alpha-D-glucosamine + phosphate. It functions in the pathway cell wall biogenesis; peptidoglycan biosynthesis. Cell wall formation. Adds enolpyruvyl to UDP-N-acetylglucosamine. The chain is UDP-N-acetylglucosamine 1-carboxyvinyltransferase from Sorangium cellulosum (strain So ce56) (Polyangium cellulosum (strain So ce56)).